The sequence spans 725 residues: MKLSLILSIALCSTRVVYAAGAEAPRISRNTVKLHSYNESRVCRHDESSNQTVSHAAMFTFNFQDGDGYRVYQVPRCLFNTHAAREVLSSVDMTETLESYRKRFRVYFVVPIYGAYRLVARSPTAKYPGGVLNPPPASSVTMQDLIVDATNIHTVVPDKLCVITEHPVIFSMKVPCSHQVITWTGYTVTVSLAQKFFVLTIKPTRDHTSENTLAMFFGDVREVDLKAPYTVGAFLLRQTPDHDLLVVVKQTAFIQRYMFLTDVVFLQRTLSADYADTSVCLRVLSVLASVVARGKQCGLITRDTVEFFFTYSLCQLMANGTRYQSTAPVSTALWRQSELELFGEFIRHCFKTTTPNPTPAFQTRMQLTEKHKPAHSSNAIDVRVLAATYSSGMHAASMADLAFLLRSTRIPPNVNTDALLQKLLFTTDAYYRMSLKIPLSGSMRRILIRVDLTVRTQLNESSVARRHFVLLTSMCSPREQISWGELLMNPQRGAPSEIYSPCVSGGRRDYTGPSVRALMESAHRPERRAEQVMSVTEALRPKRSQMSDEANCVPDSTQGAVITANEKTYLISSDFIVKGLAIPVSNTVVDRNLMITVLDRRSPCVLSRSYRERGSVIVMNNITFTERCEFCASTLVEYDEVDGLTSIMHIPSIEVLKYLTDPENDILVATPRVHYLLLTANGTVFEVTDILVNVRPSMPYSVVVALVIIAILMALGLYRLCRQKR.

The first 19 residues, 1–19, serve as a signal peptide directing secretion; that stretch reads MKLSLILSIALCSTRVVYA. Residues 20–700 lie on the Virion surface side of the membrane; it reads AGAEAPRISR…LVNVRPSMPY (681 aa). Residues N38 and N50 are each glycosylated (N-linked (GlcNAc...) asparagine; by host). The interval 184–247 is interaction with gL; it reads TGYTVTVSLA…QTPDHDLLVV (64 aa). 4 N-linked (GlcNAc...) asparagine; by host glycosylation sites follow: N319, N459, N621, and N681. The chain crosses the membrane as a helical span at residues 701–721; that stretch reads SVVVALVIIAILMALGLYRLC. The Intravirion segment spans residues 722 to 725; that stretch reads RQKR.

It belongs to the herpesviridae glycoprotein H family. Interacts with glycoprotein L (gL); this interaction is necessary for the correct processing and cell surface expression of gH. The heterodimer gH/gL seems to interact with gB trimers during fusion. In terms of processing, N-glycosylated, O-glycosylated, and sialylated.

The protein resides in the virion membrane. It is found in the host cell membrane. It localises to the host endosome membrane. In terms of biological role, the heterodimer glycoprotein H-glycoprotein L is required for the fusion of viral and plasma membranes leading to virus entry into the host cell. Following initial binding to host receptor, membrane fusion is mediated by the fusion machinery composed of gB and the heterodimer gH/gL. May also be involved in the fusion between the virion envelope and the outer nuclear membrane during virion morphogenesis. The chain is Envelope glycoprotein H from Murid herpesvirus 1 (strain Smith) (MuHV-1).